A 98-amino-acid chain; its full sequence is NADH-ubiquinone oxidoreductase chain 4L (98 aa).

Transmembrane regions (helical) follow at residues 1–21 (MSLT…GLLM), 29–49 (SLLC…ITIL), and 61–81 (IILL…LVMV).

The protein belongs to the complex I subunit 4L family. In terms of assembly, core subunit of respiratory chain NADH dehydrogenase (Complex I) which is composed of 45 different subunits.

The protein resides in the mitochondrion inner membrane. The catalysed reaction is a ubiquinone + NADH + 5 H(+)(in) = a ubiquinol + NAD(+) + 4 H(+)(out). Core subunit of the mitochondrial membrane respiratory chain NADH dehydrogenase (Complex I) which catalyzes electron transfer from NADH through the respiratory chain, using ubiquinone as an electron acceptor. Part of the enzyme membrane arm which is embedded in the lipid bilayer and involved in proton translocation. The chain is NADH-ubiquinone oxidoreductase chain 4L (MT-ND4L) from Ectophylla alba (White bat).